A 396-amino-acid chain; its full sequence is MNWYELYWQRITPLHLFLWPVSQLLILFQSVRRFLYRRAILTSIHLPVPIIIIDSITTDSPVKTSLIIQIANILKAAGLRPGIISRGYPDNHRPPTRVTISSHPHLTGEKSLLLTYHLRETCPVWIGYDRIETAKALLNAHKECNVLICDDGLQDLRLQRDFEAVIVDTSVINSGNGLIMPAGPLRDSFARLKHTDAVILAGHQRRIPDITDEIRTIHTRPQKEHFFNLSWPELTADAAGLAGKRIHAIVCDPDTQNFLDNLEFLKLTVTPRVFPENHHFIATDFQSDEAEIILIPEEDAVKCLSLHDDRIWVLQQEYRVDPGLREIILKKLREKFMDPKLLDILVCPLCKGSLIYKKDRLELICKADRLAYPIRDGIPVMLEDEARKLPDEEEIK.

Residues 1–336 (MNWYELYWQR…IILKKLREKF (336 aa)) are tetraacyldisaccharide 4'-kinase. The segment at 337-396 (MDPKLLDILVCPLCKGSLIYKKDRLELICKADRLAYPIRDGIPVMLEDEARKLPDEEEIK) is UPF0434.

It in the N-terminal section; belongs to the LpxK family. This sequence in the C-terminal section; belongs to the UPF0434 family.

It catalyses the reaction a lipid A disaccharide + ATP = a lipid IVA + ADP + H(+). Its pathway is glycolipid biosynthesis; lipid IV(A) biosynthesis; lipid IV(A) from (3R)-3-hydroxytetradecanoyl-[acyl-carrier-protein] and UDP-N-acetyl-alpha-D-glucosamine: step 6/6. In terms of biological role, transfers the gamma-phosphate of ATP to the 4'-position of a tetraacyldisaccharide 1-phosphate intermediate (termed DS-1-P) to form tetraacyldisaccharide 1,4'-bis-phosphate (lipid IVA). The sequence is that of Tetraacyldisaccharide 4'-kinase (lpxK) from Nitrosomonas europaea (strain ATCC 19718 / CIP 103999 / KCTC 2705 / NBRC 14298).